A 308-amino-acid chain; its full sequence is Mycothiol acetyltransferase (308 aa).

N-acetyltransferase domains lie at 8-155 and 160-308; these read RDVD…PRLR and VQVR…RRAR. E39 is a binding site for 1D-myo-inositol 2-(L-cysteinylamino)-2-deoxy-alpha-D-glucopyranoside. 84-86 lines the acetyl-CoA pocket; sequence LVV. The 1D-myo-inositol 2-(L-cysteinylamino)-2-deoxy-alpha-D-glucopyranoside site is built by E187, K226, and E240. Acetyl-CoA is bound by residues 244–246 and 251–257; these read LGI and QGLGLGR. Residue Y278 participates in 1D-myo-inositol 2-(L-cysteinylamino)-2-deoxy-alpha-D-glucopyranoside binding.

It belongs to the acetyltransferase family. MshD subfamily. In terms of assembly, monomer.

The enzyme catalyses 1D-myo-inositol 2-(L-cysteinylamino)-2-deoxy-alpha-D-glucopyranoside + acetyl-CoA = mycothiol + CoA + H(+). In terms of biological role, catalyzes the transfer of acetyl from acetyl-CoA to desacetylmycothiol (Cys-GlcN-Ins) to form mycothiol. The sequence is that of Mycothiol acetyltransferase from Geodermatophilus obscurus (strain ATCC 25078 / DSM 43160 / JCM 3152 / CCUG 61914 / KCC A-0152 / KCTC 9177 / NBRC 13315 / NRRL B-3577 / G-20).